The sequence spans 372 residues: NAD(P)H-quinone oxidoreductase subunit 1 (372 aa).

Helical transmembrane passes span 27–47 (LLWI…GVLV), 97–117 (VLFT…WLIV), 128–148 (VGIG…GLLM), 166–186 (AAQS…IVMM), 204–224 (FLSW…ICAL), 266–286 (VLSA…PISI), 308–328 (SLGI…AILL), and 347–367 (FLLP…LAFP).

This sequence belongs to the complex I subunit 1 family. NDH-1 is composed of at least 11 different subunits.

The protein localises to the cellular thylakoid membrane. It carries out the reaction a plastoquinone + NADH + (n+1) H(+)(in) = a plastoquinol + NAD(+) + n H(+)(out). The enzyme catalyses a plastoquinone + NADPH + (n+1) H(+)(in) = a plastoquinol + NADP(+) + n H(+)(out). In terms of biological role, NDH-1 shuttles electrons from an unknown electron donor, via FMN and iron-sulfur (Fe-S) centers, to quinones in the respiratory and/or the photosynthetic chain. The immediate electron acceptor for the enzyme in this species is believed to be plastoquinone. Couples the redox reaction to proton translocation, and thus conserves the redox energy in a proton gradient. In Prochlorococcus marinus (strain NATL2A), this protein is NAD(P)H-quinone oxidoreductase subunit 1.